The chain runs to 383 residues: N-acetyldiaminopimelate deacetylase (383 aa).

Residue aspartate 72 is part of the active site. Glutamate 131 (proton acceptor) is an active-site residue.

It belongs to the peptidase M20A family. N-acetyldiaminopimelate deacetylase subfamily.

The enzyme catalyses N-acetyl-(2S,6S)-2,6-diaminopimelate + H2O = (2S,6S)-2,6-diaminopimelate + acetate. Its pathway is amino-acid biosynthesis; L-lysine biosynthesis via DAP pathway; LL-2,6-diaminopimelate from (S)-tetrahydrodipicolinate (acetylase route): step 3/3. In terms of biological role, catalyzes the conversion of N-acetyl-diaminopimelate to diaminopimelate and acetate. This chain is N-acetyldiaminopimelate deacetylase, found in Lacticaseibacillus paracasei (strain ATCC 334 / BCRC 17002 / CCUG 31169 / CIP 107868 / KCTC 3260 / NRRL B-441) (Lactobacillus paracasei).